We begin with the raw amino-acid sequence, 194 residues long: Ribonuclease HII (194 aa).

The region spanning 3–193 (ILTAGVDEAG…VRNLLAQQAL (191 aa)) is the RNase H type-2 domain. 3 residues coordinate a divalent metal cation: aspartate 9, glutamate 10, and aspartate 101.

The protein belongs to the RNase HII family. Requires Mn(2+) as cofactor. The cofactor is Mg(2+).

It is found in the cytoplasm. It catalyses the reaction Endonucleolytic cleavage to 5'-phosphomonoester.. In terms of biological role, endonuclease that specifically degrades the RNA of RNA-DNA hybrids. The sequence is that of Ribonuclease HII from Neisseria gonorrhoeae (strain ATCC 700825 / FA 1090).